The sequence spans 327 residues: Methionyl-tRNA formyltransferase (327 aa).

121-124 (SLLP) provides a ligand contact to (6S)-5,6,7,8-tetrahydrofolate.

It belongs to the Fmt family.

It catalyses the reaction L-methionyl-tRNA(fMet) + (6R)-10-formyltetrahydrofolate = N-formyl-L-methionyl-tRNA(fMet) + (6S)-5,6,7,8-tetrahydrofolate + H(+). Attaches a formyl group to the free amino group of methionyl-tRNA(fMet). The formyl group appears to play a dual role in the initiator identity of N-formylmethionyl-tRNA by promoting its recognition by IF2 and preventing the misappropriation of this tRNA by the elongation apparatus. This chain is Methionyl-tRNA formyltransferase, found in Burkholderia pseudomallei (strain K96243).